A 513-amino-acid chain; its full sequence is Zinc finger CCCH-type with G patch domain-containing protein (513 aa).

Residues 155-178 form a C3H1-type zinc finger; the sequence is PCSYYLEGECRFDEAKCRFSHGAL. Composition is skewed to acidic residues over residues 252–261 and 273–283; these read DQDEDDELSS and SDEAESDMDDL. The tract at residues 252-283 is disordered; sequence DQDEDDELSSEESTSSMRDASSDEAESDMDDL. The G-patch domain occupies 312-358; that stretch reads TRGIGSKLMEKMGYIHGTGLGSDGRGIVTPVSAQILPQGRSLDACME. The segment covering 477 to 495 has biased composition (polar residues); that stretch reads QVQMQSHKQELATLQAQER. The tract at residues 477 to 513 is disordered; that stretch reads QVQMQSHKQELATLQAQERSLSKEQQTRKSKNKMFEF. Residues 496-513 are compositionally biased toward basic and acidic residues; it reads SLSKEQQTRKSKNKMFEF.

It localises to the nucleus. In terms of biological role, transcription repressor. This chain is Zinc finger CCCH-type with G patch domain-containing protein, found in Drosophila simulans (Fruit fly).